Reading from the N-terminus, the 267-residue chain is S-adenosylmethionine decarboxylase proenzyme (267 aa).

S114 serves as the catalytic Schiff-base intermediate with substrate; via pyruvic acid. S114 carries the pyruvic acid (Ser); by autocatalysis modification. H119 functions as the Proton acceptor; for processing activity in the catalytic mechanism. The active-site Proton donor; for catalytic activity is C142.

This sequence belongs to the prokaryotic AdoMetDC family. Type 2 subfamily. As to quaternary structure, heterooctamer of four alpha and four beta chains arranged as a tetramer of alpha/beta heterodimers. Requires pyruvate as cofactor. In terms of processing, is synthesized initially as an inactive proenzyme. Formation of the active enzyme involves a self-maturation process in which the active site pyruvoyl group is generated from an internal serine residue via an autocatalytic post-translational modification. Two non-identical subunits are generated from the proenzyme in this reaction, and the pyruvate is formed at the N-terminus of the alpha chain, which is derived from the carboxyl end of the proenzyme. The post-translation cleavage follows an unusual pathway, termed non-hydrolytic serinolysis, in which the side chain hydroxyl group of the serine supplies its oxygen atom to form the C-terminus of the beta chain, while the remainder of the serine residue undergoes an oxidative deamination to produce ammonia and the pyruvoyl group blocking the N-terminus of the alpha chain.

The catalysed reaction is S-adenosyl-L-methionine + H(+) = S-adenosyl 3-(methylsulfanyl)propylamine + CO2. It functions in the pathway amine and polyamine biosynthesis; S-adenosylmethioninamine biosynthesis; S-adenosylmethioninamine from S-adenosyl-L-methionine: step 1/1. Functionally, catalyzes the decarboxylation of S-adenosylmethionine to S-adenosylmethioninamine (dcAdoMet), the propylamine donor required for the synthesis of the polyamines spermine and spermidine from the diamine putrescine. This chain is S-adenosylmethionine decarboxylase proenzyme, found in Erwinia tasmaniensis (strain DSM 17950 / CFBP 7177 / CIP 109463 / NCPPB 4357 / Et1/99).